Here is a 60-residue protein sequence, read N- to C-terminus: Large ribosomal subunit protein uL30 (60 aa).

Belongs to the universal ribosomal protein uL30 family. As to quaternary structure, part of the 50S ribosomal subunit.

The polypeptide is Large ribosomal subunit protein uL30 (Streptococcus uberis (strain ATCC BAA-854 / 0140J)).